The sequence spans 186 residues: Lipid A acyltransferase PagP (186 aa).

Residues 1 to 25 (MNVSKYVAIFSFVFIQLISVGKVFA) form the signal peptide. Catalysis depends on residues His58, Asp101, and Ser102.

It belongs to the lipid A palmitoyltransferase family. Homodimer.

The protein localises to the cell outer membrane. The enzyme catalyses a lipid A + a 1,2-diacyl-sn-glycero-3-phosphocholine = a hepta-acyl lipid A + a 2-acyl-sn-glycero-3-phosphocholine. It carries out the reaction a lipid IVA + a 1,2-diacyl-sn-glycero-3-phosphocholine = a lipid IVB + a 2-acyl-sn-glycero-3-phosphocholine. The catalysed reaction is a lipid IIA + a 1,2-diacyl-sn-glycero-3-phosphocholine = a lipid IIB + a 2-acyl-sn-glycero-3-phosphocholine. Functionally, transfers a fatty acid residue from the sn-1 position of a phospholipid to the N-linked hydroxyfatty acid chain on the proximal unit of lipid A or its precursors. The protein is Lipid A acyltransferase PagP of Shigella boydii serotype 4 (strain Sb227).